A 206-amino-acid chain; its full sequence is MDEDVLTTLKILIIGESGVGKSSLLLRFTDDTFDPELAATIGVDFKVKTISVDGNKAKLAIWDTAGQERFRTLTPSYYRGAQGVILVYDVTRRDTFVKLDNWLNELETYCTRNDIVKMLVGNKIDKENREVDRNEGLKFARKHSMLFIEASAKTCDGVQCAFEELVEKIIQTPGLWESESQNKGVKLSNKEEGHGGGACGGYCSML.

Residues Ser-17, Gly-20, Lys-21, Ser-22, Ser-23, Asp-34, Pro-35, Thr-40, Gly-66, Lys-123, Asp-125, and Ala-152 each contribute to the GTP site. Position 22 (Ser-22) interacts with Mg(2+). 2 consecutive short sequence motifs (switch) follow at residues 31 to 45 and 63 to 80; these read DTFD…GVDF and DTAG…YYRG. Thr-40 contributes to the Mg(2+) binding site. Cys-199 carries S-palmitoyl cysteine lipidation. Cys-203 is modified (cysteine methyl ester). The S-geranylgeranyl cysteine moiety is linked to residue Cys-203. A propeptide spans 204–206 (removed in mature form); that stretch reads SML.

This sequence belongs to the small GTPase superfamily. Rab family. It depends on Mg(2+) as a cofactor.

The protein resides in the endoplasmic reticulum membrane. It localises to the golgi apparatus. Its subcellular location is the cis-Golgi network membrane. It is found in the lipid droplet. The protein localises to the apical cell membrane. It catalyses the reaction GTP + H2O = GDP + phosphate + H(+). With respect to regulation, regulated by guanine nucleotide exchange factors (GEFs) which promote the exchange of bound GDP for free GTP. Regulated by GTPase activating proteins (GAPs) which increase the GTP hydrolysis activity at the ER membrane. Inhibited by GDP dissociation inhibitors (GDIs) which prevent Rab-GDP dissociation. Functionally, the small GTPases Rab are key regulators of intracellular membrane trafficking, from the formation of transport vesicles to their fusion with membranes. Rabs cycle between an inactive GDP-bound form and an active GTP-bound form that is able to recruit to membranes different sets of downstream effectors directly responsible for vesicle formation, movement, tethering and fusion. RAB18 is required for the localization of ZFYVE1 to lipid droplets and for its function in mediating the formation of endoplasmic reticulum-lipid droplets (ER-LD) contacts. Also required for maintaining endoplasmic reticulum structure. Plays a role in apical endocytosis/recycling. Plays a key role in eye and brain development and neurodegeneration. In Gallus gallus (Chicken), this protein is Ras-related protein Rab-18 (RAB18).